We begin with the raw amino-acid sequence, 189 residues long: Large ribosomal subunit protein uL6 (189 aa).

It belongs to the universal ribosomal protein uL6 family. As to quaternary structure, part of the 50S ribosomal subunit.

Its function is as follows. This protein binds to the 23S rRNA, and is important in its secondary structure. It is located near the subunit interface in the base of the L7/L12 stalk, and near the tRNA binding site of the peptidyltransferase center. The chain is Large ribosomal subunit protein uL6 from Microcystis aeruginosa (strain NIES-843 / IAM M-2473).